The chain runs to 904 residues: Nitrate reductase [NADH] 2 (904 aa).

Polar residues-rich tracts occupy residues 1 to 10 and 35 to 50; these read MAASVENRQF and PSPN…NSTI. Residues 1 to 65 form a disordered region; sequence MAASVENRQF…SSEDDDDDDE (65 aa). The segment covering 56–65 has biased composition (acidic residues); it reads SSEDDDDDDE. Cysteine 183 contacts Mo-molybdopterin. Residues 531–606 enclose the Cytochrome b5 heme-binding domain; the sequence is SKMYSMSEVR…LEDFRIGELI (76 aa). Positions 566 and 589 each coordinate heme. The region spanning 647 to 759 is the FAD-binding FR-type domain; sequence REKIPCKLID…KGPLGHIEYQ (113 aa). FAD is bound by residues 699–702, 716–720, phenylalanine 721, phenylalanine 728, 733–735, and threonine 786; these read RAYT, VVKIY, and QMS.

This sequence belongs to the nitrate reductase family. In terms of assembly, homodimer. FAD serves as cofactor. Heme is required as a cofactor. It depends on Mo-molybdopterin as a cofactor.

It catalyses the reaction nitrite + NAD(+) + H2O = nitrate + NADH + H(+). Regulated by the nitrogen source and controlled by the circadian rhythm. Functionally, nitrate reductase is a key enzyme involved in the first step of nitrate assimilation in plants, fungi and bacteria. This Nicotiana tabacum (Common tobacco) protein is Nitrate reductase [NADH] 2 (NIA2).